Here is a 254-residue protein sequence, read N- to C-terminus: Glc operon transcriptional activator (254 aa).

An HTH gntR-type domain is found at 6-74; that stretch reads RPICEVVAES…QGRDSRVARL (69 aa). A DNA-binding region (H-T-H motif) is located at residues 34 to 53; the sequence is ERRLCEKLGFSRSALREGLT.

In terms of biological role, transcriptional activator of the glcDEFGB operon which is associated with glycolate utilization, and encodes malate synthase G and the genes needed for glycolate oxidase activity. Also negatively regulates the transcription of its own gene. Glycolate acts as an effector, but GlcC can also use acetate as an alternative effector. In Escherichia coli O6:H1 (strain CFT073 / ATCC 700928 / UPEC), this protein is Glc operon transcriptional activator (glcC).